A 20-amino-acid polypeptide reads, in one-letter code: Cathepsin L1 (20 aa).

The span at 1–10 (AVPDKIDPRE) shows a compositional bias: basic and acidic residues. Positions 1-20 (AVPDKIDPRESGYVTGVKDQ) are disordered.

This sequence belongs to the peptidase C1 family. As to quaternary structure, dimer of a heavy and a light chain linked by disulfide bonds.

It is found in the lysosome. The enzyme catalyses Specificity close to that of papain. As compared to cathepsin B, cathepsin L exhibits higher activity toward protein substrates, but has little activity on Z-Arg-Arg-NHMec, and no peptidyl-dipeptidase activity.. Functionally, thiol protease that assists the parasite in burrowing through the gut wall and liver of its mammalian host. The sequence is that of Cathepsin L1 from Fasciola hepatica (Liver fluke).